Reading from the N-terminus, the 537-residue chain is Actin-histidine N-methyltransferase (537 aa).

Over residues 1 to 12 (MGKNTKRNKKTK) the composition is skewed to basic residues. The disordered stretch occupies residues 1–50 (MGKNTKRNKKTKQQQQQPQQNGVTASASGTAVEDFEDQQAASSLPSLNGK). Residues Arg114, 143–145 (YQL), Arg299, 325–329 (DMANH), and 375–377 (NGF) contribute to the S-adenosyl-L-methionine site. An SET domain is found at 133-364 (EGLEIAIFPG…TGEQFFIYYG (232 aa)).

Belongs to the class V-like SAM-binding methyltransferase superfamily. SETD3 actin-histidine methyltransferase family.

It is found in the cytoplasm. The protein localises to the nucleus. It carries out the reaction L-histidyl-[protein] + S-adenosyl-L-methionine = N(tele)-methyl-L-histidyl-[protein] + S-adenosyl-L-homocysteine + H(+). Protein-histidine N-methyltransferase that specifically mediates 3-methylhistidine (tele-methylhistidine) methylation of actin at 'His-74'. This chain is Actin-histidine N-methyltransferase, found in Drosophila melanogaster (Fruit fly).